The sequence spans 134 residues: Arsenate reductase (134 aa).

Catalysis depends on nucleophile residues Cys11, Cys83, and Cys90. 2 disulfides stabilise this stretch: Cys11–Cys83 and Cys83–Cys90.

It belongs to the low molecular weight phosphotyrosine protein phosphatase family. Thioredoxin-coupled ArsC subfamily.

The protein localises to the cytoplasm. It carries out the reaction arsenate + [thioredoxin]-dithiol + H(+) = arsenite + [thioredoxin]-disulfide + H2O. In terms of biological role, catalyzes the reduction of arsenate [As(V)] to arsenite [As(III)]. This chain is Arsenate reductase, found in Bacillus cereus (strain G9842).